We begin with the raw amino-acid sequence, 287 residues long: X-box-binding protein 1 (287 aa).

The bZIP domain maps to 61–117 (EEKMDRRKLKNRVAAQNARDKKKERSAKIEDVMRDLVEENRRLRAENERLRRQNKNL). Residues 63-87 (KMDRRKLKNRVAAQNARDKKKERSA) form a disordered region. Positions 63–88 (KMDRRKLKNRVAAQNARDKKKERSAK) are basic motif. Basic and acidic residues predominate over residues 78–87 (ARDKKKERSA). A leucine-zipper region spans residues 89-117 (IEDVMRDLVEENRRLRAENERLRRQNKNL).

As to quaternary structure, interacts with SUMO-conjugating enzyme ubc-9; the interaction is direct. In terms of processing, sumoylated. Sumoylation may negatively modulate the transcription of genes involved in the ER-stress-response.

The protein resides in the nucleus. Functionally, required for transcriptional regulation of the unfolded protein response (UPR) in the endoplasmic reticulum (ER) under stressed conditions, acting downstream of ire-1, and also maintaining ER homeostasis via a negative feedback loop, in parallel with ER kinase pek-1. May also regulate Golgi protein trafficking distal to the ER. Protects the host organism from the detrimental effects of mounting an innate immune response to microbes, such as the Gram-negative bacterium P.aeruginosa, probably by modulating the UPR. Plays a role in the unconventional cytoplasmic splicing processing of its own mRNA triggered by the endoplasmic reticulum (ER) transmembrane endoribonuclease ire-1: upon ER stress, the emerging xbp-1 polypeptide chain, as part of a mRNA-ribosome-nascent chain (R-RNC) complex, cotranslationally recruits its own unprocessed mRNA through transient docking to the ER membrane and translational pausing, therefore facilitating efficient ire-1-mediated xbp-1 mRNA isoform 2 production. In terms of biological role, functions as a stress-inducible potent transcriptional activator during endoplasmic reticulum (ER) stress by inducing unfolded protein response (UPR) target genes via binding to the UPR element (UPRE). Plays a role in modulation of the UPR, lipid metabolism, proteostasis, and lifespan. In neurons, rescues stress resistance, increases longevity, and, drives expression of lysosomal genes in the intestine and activates the UPR in distal, non-neuronal cell types through a cell-nonautonomous mechanism. In neurons or intestine, plays a role in protection against proteotoxicity, acting via positive modulation of genes involved in lysosomal function, including lipases and the fatty-acid desaturase fat-6. Protection against proteotoxicity in neurons is dependent upon the transcription factor atf-6. The sequence is that of X-box-binding protein 1 from Caenorhabditis elegans.